Reading from the N-terminus, the 691-residue chain is Elongation factor G (691 aa).

The tr-type G domain occupies 8–283; the sequence is EDYRNFGIMA…AVVDYLPSPV (276 aa). Residues 17–24, 81–85, and 135–138 contribute to the GTP site; these read AHIDAGKT, DTPGH, and NKMD.

The protein belongs to the TRAFAC class translation factor GTPase superfamily. Classic translation factor GTPase family. EF-G/EF-2 subfamily.

Its subcellular location is the cytoplasm. Catalyzes the GTP-dependent ribosomal translocation step during translation elongation. During this step, the ribosome changes from the pre-translocational (PRE) to the post-translocational (POST) state as the newly formed A-site-bound peptidyl-tRNA and P-site-bound deacylated tRNA move to the P and E sites, respectively. Catalyzes the coordinated movement of the two tRNA molecules, the mRNA and conformational changes in the ribosome. The polypeptide is Elongation factor G (Methylorubrum populi (strain ATCC BAA-705 / NCIMB 13946 / BJ001) (Methylobacterium populi)).